We begin with the raw amino-acid sequence, 292 residues long: Ribosomal RNA small subunit methyltransferase A (292 aa).

Residues Asn28, Leu30, Gly55, Glu76, Asp101, and Asn126 each contribute to the S-adenosyl-L-methionine site.

Belongs to the class I-like SAM-binding methyltransferase superfamily. rRNA adenine N(6)-methyltransferase family. RsmA subfamily.

It localises to the cytoplasm. It catalyses the reaction adenosine(1518)/adenosine(1519) in 16S rRNA + 4 S-adenosyl-L-methionine = N(6)-dimethyladenosine(1518)/N(6)-dimethyladenosine(1519) in 16S rRNA + 4 S-adenosyl-L-homocysteine + 4 H(+). In terms of biological role, specifically dimethylates two adjacent adenosines (A1518 and A1519) in the loop of a conserved hairpin near the 3'-end of 16S rRNA in the 30S particle. May play a critical role in biogenesis of 30S subunits. This Bacillus cereus (strain G9842) protein is Ribosomal RNA small subunit methyltransferase A.